The following is a 436-amino-acid chain: UPF0597 protein YhaM (436 aa).

Belongs to the UPF0597 family.

The sequence is that of UPF0597 protein YhaM from Escherichia coli (strain K12 / MC4100 / BW2952).